The chain runs to 842 residues: Gamma-aminobutyric acid type B receptor subunit 2 (842 aa).

The N-terminal stretch at 1–17 is a signal peptide; sequence MSRWLSLLLFAVQAVGG. Over 18–438 the chain is Extracellular; that stretch reads YEAGEELSCK…TERRREHISS (421 aa). N-linked (GlcNAc...) asparagine glycans are attached at residues Asn274, Asn279, Asn327, and Asn366. The helical transmembrane segment at 439 to 459 threads the bilayer; it reads ILFLAMSLLALIGIFLALIFL. Residues 460-477 are Cytoplasmic-facing; that stretch reads LINFRYRNHRFIKMSSPN. The chain crosses the membrane as a helical span at residues 478–498; that stretch reads LNNIIIAGSICTFASVIMLGL. Residues 499–506 are Extracellular-facing; it reads DTRIVSPD. Residues 507-527 form a helical membrane-spanning segment; sequence VFVWLCYTKTWTLCIGFTLSF. Over 528–556 the chain is Cytoplasmic; the sequence is GAMFSKTWRVHSIFTNIRMDRKAIKDSKL. The helical transmembrane segment at 557-577 threads the bilayer; the sequence is FIILGILLFIDICVLVTWAFV. Over 578–610 the chain is Extracellular; the sequence is SPFSYTVTELPHIPEDNIVIIPEVEKCNSSHSG. Asn605 carries N-linked (GlcNAc...) asparagine glycosylation. The chain crosses the membrane as a helical span at residues 611–631; sequence VFQAVLYAVKGVLMILGCFLA. The Cytoplasmic portion of the chain corresponds to 632–647; sequence WETRHVNVPALNDSKY. The chain crosses the membrane as a helical span at residues 648-668; the sequence is IGTSVYCCVVMSVLGLSTSVI. Over 669-676 the chain is Extracellular; the sequence is LQERVNEM. The chain crosses the membrane as a helical span at residues 677–697; that stretch reads FSLASFFVIFSTTLTLCLVFV. Topologically, residues 698–842 are cytoplasmic; it reads PKVIELARNP…VDPDEPSTKL (145 aa). Residues 725-740 show a composition bias toward polar residues; the sequence is AKTSQPMSPQPRSDSS. Disordered stretches follow at residues 725–744 and 791–842; these read AKTS…GDLI and SPSS…STKL.

The protein belongs to the G-protein coupled receptor 3 family. As to quaternary structure, may form a heterodimer with gbb-1. Expressed in cholinergic motor neurons.

It is found in the cell membrane. Component of a heterodimeric G-protein coupled receptor for GABA, formed by gbb-1 and gbb-2. Within the heterodimeric GABA receptor, only gbb-1 seems to bind agonists, while gbb-2 mediates coupling to G proteins. Ligand binding causes a conformation change that triggers signaling via guanine nucleotide-binding proteins (G proteins) and modulates the activity of down-stream effectors, such as adenylate cyclase. Signaling inhibits adenylate cyclase, stimulates phospholipase A2, activates potassium channels, inactivates voltage-dependent calcium-channels and modulates inositol phospholipid hydrolysis. Plays a critical role in the fine-tuning of inhibitory synaptic transmission. Pre-synaptic GABA receptor inhibits neurotransmitter release by down-regulating high-voltage activated calcium channels, whereas postsynaptic GABA receptor decreases neuronal excitability by activating a prominent inwardly rectifying potassium (Kir) conductance that underlies the late inhibitory postsynaptic potentials. Along with gbb-1, may couple to the G(o)-alpha G-protein goa-1 to negatively regulate cholinergic receptor activity in the presence of high levels of acetylcholine in ventral cord motor neurons. As acetylcholine depolarizes body wall muscles, modulation of acetylcholine levels most likely results in the control of locomotory behavior. Regulates locomotory behavior in response to GABA release by GABAergic motor neurons. The sequence is that of Gamma-aminobutyric acid type B receptor subunit 2 from Caenorhabditis elegans.